Consider the following 93-residue polypeptide: uncharacterized protein (93 aa).

This is an uncharacterized protein from Treponema pallidum (strain Nichols).